A 466-amino-acid polypeptide reads, in one-letter code: Muscarinic acetylcholine receptor M2 (466 aa).

The Extracellular segment spans residues 1–22 (MNNSTNSSNSGLALTSPYKTFE). Asparagine 2, asparagine 3, and asparagine 6 each carry an N-linked (GlcNAc...) asparagine glycan. A helical membrane pass occupies residues 23 to 45 (VVFIVLVAGSLSLVTIIGNILVM). Residues 46–59 (VSIKVNRHLQTVNN) lie on the Cytoplasmic side of the membrane. A helical membrane pass occupies residues 60 to 80 (YFLFSLACADLIIGVFSMNLY). Residues 81-97 (TLYTVIGYWPLGPVVCD) lie on the Extracellular side of the membrane. A disulfide bond links cysteine 96 and cysteine 176. The helical transmembrane segment at 98–119 (LWLALDYVVSNASVMNLLIISF) threads the bilayer. The short motif at 120–122 (DRY) is the Important for signaling element. Residues 120 to 139 (DRYFCVTKPLTYPVKRTTKM) lie on the Cytoplasmic side of the membrane. Residues 140-162 (AGMMIAAAWVLSFILWAPAILFW) traverse the membrane as a helical segment. Topologically, residues 163–184 (QFIVGVRTVEDGECYIQFFSNA) are extracellular. A helical transmembrane segment spans residues 185–209 (AVTFGTAIAAFYLPVIIMTVLYWHI). Over 210-387 (SRASKSRIKK…PPSREKKVTR (178 aa)) the chain is Cytoplasmic. Residues 218 to 320 (KKDKKEPVAN…SLGHSKDENS (103 aa)) are disordered. Serine 232 carries the phosphoserine modification. Residues 254 to 270 (ALEHNKIQNGKAPRDAV) show a composition bias toward basic and acidic residues. 2 stretches are compositionally biased toward polar residues: residues 284–293 (NDSTSVSAVA) and 304–313 (DENTVSTSLG). The helical transmembrane segment at 388–410 (TILAILLAFIITWAPYNVMVLIN) threads the bilayer. Over 411–418 (TFCAPCIP) the chain is Extracellular. Cysteine 413 and cysteine 416 are joined by a disulfide. Residues 419–442 (NTVWTIGYWLCYINSTINPACYAL) traverse the membrane as a helical segment. The Important for signaling signature appears at 436–440 (NPACY). Residues 443–466 (CNATFKKTFKHLLMCHYKNIGATR) are Cytoplasmic-facing. 3 positions are modified to phosphothreonine: threonine 446, threonine 450, and threonine 465.

The protein belongs to the G-protein coupled receptor 1 family. Muscarinic acetylcholine receptor subfamily. CHRM2 sub-subfamily. In terms of assembly, interacts with ARRB1 and ARRB2. Interacts with RACK1; the interaction regulates CHRM2 internalization. Phosphorylated in response to agonist treatment.

The protein localises to the cell membrane. Its subcellular location is the postsynaptic cell membrane. Its function is as follows. The muscarinic acetylcholine receptor mediates various cellular responses, including inhibition of adenylate cyclase, breakdown of phosphoinositides and modulation of potassium channels through the action of G proteins. Primary transducing effect is adenylate cyclase inhibition. This is Muscarinic acetylcholine receptor M2 (CHRM2) from Sus scrofa (Pig).